A 449-amino-acid polypeptide reads, in one-letter code: Methylenetetrahydrofolate--tRNA-(uracil-5-)-methyltransferase TrmFO (449 aa).

Position 9–14 (9–14 (GGGIAG)) interacts with FAD.

Belongs to the MnmG family. TrmFO subfamily. Requires FAD as cofactor.

The protein resides in the cytoplasm. It carries out the reaction uridine(54) in tRNA + (6R)-5,10-methylene-5,6,7,8-tetrahydrofolate + NADH + H(+) = 5-methyluridine(54) in tRNA + (6S)-5,6,7,8-tetrahydrofolate + NAD(+). The catalysed reaction is uridine(54) in tRNA + (6R)-5,10-methylene-5,6,7,8-tetrahydrofolate + NADPH + H(+) = 5-methyluridine(54) in tRNA + (6S)-5,6,7,8-tetrahydrofolate + NADP(+). In terms of biological role, catalyzes the folate-dependent formation of 5-methyl-uridine at position 54 (M-5-U54) in all tRNAs. The protein is Methylenetetrahydrofolate--tRNA-(uracil-5-)-methyltransferase TrmFO of Gloeobacter violaceus (strain ATCC 29082 / PCC 7421).